A 262-amino-acid polypeptide reads, in one-letter code: MNKPLLSELIIDIGNTSIAFALFKDNQVNLFIKMKTNLMLRYDEVYSFFEENFDFNVNKVFISSVVPILNETFKNVIFSFFKIKPLFIGFDLNYDLTFNPYKSDKFLLGSDVFANLVAAIENYSFENVLVVDLGTACTIFAVSRQDGILGGIINSGPLINFNSLLDNAYLIKKFPISTPNNLLERTTSGSVNSGLFYQYKYLIEGVYRDIKQMYKKKFNLIITGGNADLILSLIEIEFIFNIHLTVEGVRILGNSIDFKFVN.

12–19 lines the ATP pocket; the sequence is DIGNTSIA. Substrate is bound by residues Y94 and 109–112; that span reads GSDV. The active-site Proton acceptor is the D111. K(+) is bound at residue D132. T135 is an ATP binding site. Position 187 (T187) interacts with substrate.

It belongs to the type III pantothenate kinase family. As to quaternary structure, homodimer. NH4(+) serves as cofactor. It depends on K(+) as a cofactor.

The protein localises to the cytoplasm. It carries out the reaction (R)-pantothenate + ATP = (R)-4'-phosphopantothenate + ADP + H(+). Its pathway is cofactor biosynthesis; coenzyme A biosynthesis; CoA from (R)-pantothenate: step 1/5. Functionally, catalyzes the phosphorylation of pantothenate (Pan), the first step in CoA biosynthesis. In Borreliella burgdorferi (strain ATCC 35210 / DSM 4680 / CIP 102532 / B31) (Borrelia burgdorferi), this protein is Type III pantothenate kinase.